A 108-amino-acid chain; its full sequence is Holo-[acyl-carrier-protein] synthase (108 aa).

Residues Asp-9 and Glu-52 each contribute to the Mg(2+) site.

Belongs to the P-Pant transferase superfamily. AcpS family. Mg(2+) serves as cofactor.

It localises to the cytoplasm. The catalysed reaction is apo-[ACP] + CoA = holo-[ACP] + adenosine 3',5'-bisphosphate + H(+). Functionally, transfers the 4'-phosphopantetheine moiety from coenzyme A to a Ser of acyl-carrier-protein. The polypeptide is Holo-[acyl-carrier-protein] synthase (Coprothermobacter proteolyticus (strain ATCC 35245 / DSM 5265 / OCM 4 / BT)).